The primary structure comprises 40 residues: Neutral phospholipase A2 homolog cannitoxin beta chain 2 (40 aa).

As to quaternary structure, heterotrimer of alpha, beta, and gamma chains; non-covalently linked. Expressed by the venom gland.

The protein resides in the secreted. Functionally, heterotrimer: Snake venom phospholipase A2 (PLA2) heterotrimer that acts as a potent presynaptic neurotoxin by blocking synaptic transmission and synaptic vesicle recycling. Enzymatic activity is essential for the neurotoxic effects. May act by binding in a calcium-dependent fashion to neurotonal pentraxin-1 (NPTX1) and neurotonal pentraxin-2 (NPTX2), but not to neuronal pentraxin receptor (NPTXR). Also binds to taipoxin-associated calcium binding protein 49 (RCN2), a protein localized in the lumen of endoplasmic reticulum. In terms of biological role, monomer (beta chain): Snake venom phospholipase A2 homolog that is neither toxic nor enzymatically active. Does not bind calcium. In Oxyuranus scutellatus canni (Papuan taipan), this protein is Neutral phospholipase A2 homolog cannitoxin beta chain 2.